We begin with the raw amino-acid sequence, 23 residues long: Septenin 2a (23 aa).

In terms of tissue distribution, expressed in skin glands.

It localises to the secreted. Functionally, may act as an antimicrobial peptide. This chain is Septenin 2a, found in Osteopilus septentrionalis (Cuban treefrog).